The primary structure comprises 288 residues: Plasmodesmata-located protein 6 (288 aa).

The N-terminal stretch at 1 to 22 (MFATKTVLFIAVVSLLGTFSSA) is a signal peptide. Residues 23 to 256 (AVDTFIYGGC…NNDDDEIEKT (234 aa)) lie on the Extracellular side of the membrane. 2 consecutive Gnk2-homologous domains span residues 25 to 132 (DTFI…NTTF) and 137 to 234 (DKTV…ARGG). 6 disulfide bridges follow: cysteine 32–cysteine 110, cysteine 84–cysteine 95, cysteine 98–cysteine 123, cysteine 145–cysteine 212, cysteine 188–cysteine 197, and cysteine 200–cysteine 225. The helical transmembrane segment at 257–277 (LAIIVGLIAGVTLLVVFLSFM) threads the bilayer. The interval 257 to 277 (LAIIVGLIAGVTLLVVFLSFM) is necessary and sufficient for plasmodesmal targeting. Topologically, residues 278–288 (AKSCERGKGGK) are cytoplasmic.

Belongs to the cysteine-rich repeat secretory protein family. Plasmodesmata-located proteins (PDLD) subfamily. (Microbial infection) Interacts with Grapevine fanleaf virus (GFLV) 2B-MP. As to expression, highly expressed in inflorescence silique (at mRNA level).

Its subcellular location is the cell membrane. It is found in the cell junction. It localises to the plasmodesma. In terms of biological role, modulates cell-to-cell trafficking. The protein is Plasmodesmata-located protein 6 of Arabidopsis thaliana (Mouse-ear cress).